Consider the following 284-residue polypeptide: Bifunctional protein FolD 1 (284 aa).

NADP(+)-binding positions include G166 to S168 and I232.

This sequence belongs to the tetrahydrofolate dehydrogenase/cyclohydrolase family. As to quaternary structure, homodimer.

The catalysed reaction is (6R)-5,10-methylene-5,6,7,8-tetrahydrofolate + NADP(+) = (6R)-5,10-methenyltetrahydrofolate + NADPH. It carries out the reaction (6R)-5,10-methenyltetrahydrofolate + H2O = (6R)-10-formyltetrahydrofolate + H(+). Its pathway is one-carbon metabolism; tetrahydrofolate interconversion. Functionally, catalyzes the oxidation of 5,10-methylenetetrahydrofolate to 5,10-methenyltetrahydrofolate and then the hydrolysis of 5,10-methenyltetrahydrofolate to 10-formyltetrahydrofolate. The chain is Bifunctional protein FolD 1 from Pseudomonas syringae pv. tomato (strain ATCC BAA-871 / DC3000).